Reading from the N-terminus, the 473-residue chain is Nuclear distribution protein PAC1 (473 aa).

The region spanning 9–41 is the LisH domain; sequence QAEELHKSIIAYFLSAKLPKSAAALREEIADSV. The stretch at 60-87 forms a coiled coil; the sequence is TSVVRLQKKIMDLEARNSALQSELDSAT. Over residues 80 to 93 the composition is skewed to polar residues; it reads QSELDSATPTSLSR. A disordered region spans residues 80–99; that stretch reads QSELDSATPTSLSRRNQDPV. WD repeat units lie at residues 113 to 154, 156 to 196, 200 to 247, 250 to 289, 292 to 352, 354 to 393, 397 to 434, and 435 to 472; these read SHRN…RTIK, HTRA…KNIR, GHDH…CVRT, GHVE…TKST, GHEH…IKTL, GHDN…KCVR, DAHA…ALSG, and VNGI…RVFA.

It belongs to the WD repeat LIS1/nudF family. Self-associates. Interacts with NDL1 and dynein.

It is found in the cytoplasm. It localises to the cytoskeleton. The protein resides in the spindle pole. Positively regulates the activity of the minus-end directed microtubule motor protein dynein. May enhance dynein-mediated microtubule sliding by targeting dynein to the microtubule plus end. Required for nuclear migration during vegetative growth as well as development. Required for retrograde early endosome (EE) transport from the hyphal tip. Required for localization of dynein to the mitotic spindle poles. Recruits additional proteins to the dynein complex at SPBs. This chain is Nuclear distribution protein PAC1, found in Ajellomyces dermatitidis (strain ER-3 / ATCC MYA-2586) (Blastomyces dermatitidis).